The following is a 515-amino-acid chain: 13S globulin seed storage protein (515 aa).

Positions Met-1–Ala-22 are cleaved as a signal peptide. Residues Ala-23 to Leu-96 form an igE-binding epitope region. Intrachain disulfides connect Cys-47/Cys-80 and Cys-123/Cys-327. The Cupin type-1 1 domain occupies Leu-52 to Ser-272. The interval Leu-97 to Ala-172 is igE-binding epitope with a very strong IgE-binding activity. Disordered regions lie at residues Cys-123–His-156, Leu-210–Asp-241, and Pro-295–Asn-320. 3 stretches are compositionally biased toward basic and acidic residues: residues His-141–His-156, Gly-217–Ser-239, and Pro-295–Ser-316. IgE-binding epitope stretches follow at residues Gly-173–Ala-248 and Asn-249–Asn-320. Residues Gln-333 to Tyr-482 enclose the Cupin type-1 2 domain. Residues Arg-347–Asn-387 are igE-binding epitope with a strong IgE-binding activity. IgE-binding epitope regions lie at residues Glu-407 to Gly-457, Glu-440 to Ile-476, and Asp-475 to Arg-511.

Belongs to the 11S seed storage protein (globulins) family. As to quaternary structure, homohexamer. Post-translationally, proteolytically processed from a single precursor to produce an acidic and a basic chain that are linked by a disulfide bond. As to expression, expressed in seeds (at protein level).

Its function is as follows. Seed storage protein. This chain is 13S globulin seed storage protein, found in Fagopyrum tataricum (Tartarian buckwheat).